A 145-amino-acid polypeptide reads, in one-letter code: Transcriptional regulator MraZ (145 aa).

SpoVT-AbrB domains lie at 7 to 54 and 83 to 126; these read NATN…GPDL and GVFM…QPQA.

The protein belongs to the MraZ family. Forms oligomers.

It is found in the cytoplasm. Its subcellular location is the nucleoid. This chain is Transcriptional regulator MraZ, found in Rhizobium johnstonii (strain DSM 114642 / LMG 32736 / 3841) (Rhizobium leguminosarum bv. viciae).